Consider the following 31-residue polypeptide: Cyclotide mden-N (31 aa).

Positions 1 to 31 (GTIPCGESCVYIPCLTSALGCSCKNKVCYRN) form a cross-link, cyclopeptide (Gly-Asn). Intrachain disulfides connect Cys-5/Cys-21, Cys-9/Cys-23, and Cys-14/Cys-28.

This sequence belongs to the cyclotide family. Bracelet subfamily. Post-translationally, this is a cyclic peptide.

Probably participates in a plant defense mechanism. The chain is Cyclotide mden-N from Melicytus dentatus (Tree violet).